The sequence spans 226 residues: Phosphoribosylformylglycinamidine synthase subunit PurQ (226 aa).

The region spanning 3–225 (FAVIVFPGSN…VKWGARHVTY (223 aa)) is the Glutamine amidotransferase type-1 domain. The active-site Nucleophile is Cys86. Active-site residues include His194 and Glu196.

As to quaternary structure, part of the FGAM synthase complex composed of 1 PurL, 1 PurQ and 2 PurS subunits.

It is found in the cytoplasm. The catalysed reaction is N(2)-formyl-N(1)-(5-phospho-beta-D-ribosyl)glycinamide + L-glutamine + ATP + H2O = 2-formamido-N(1)-(5-O-phospho-beta-D-ribosyl)acetamidine + L-glutamate + ADP + phosphate + H(+). It catalyses the reaction L-glutamine + H2O = L-glutamate + NH4(+). It functions in the pathway purine metabolism; IMP biosynthesis via de novo pathway; 5-amino-1-(5-phospho-D-ribosyl)imidazole from N(2)-formyl-N(1)-(5-phospho-D-ribosyl)glycinamide: step 1/2. Its function is as follows. Part of the phosphoribosylformylglycinamidine synthase complex involved in the purines biosynthetic pathway. Catalyzes the ATP-dependent conversion of formylglycinamide ribonucleotide (FGAR) and glutamine to yield formylglycinamidine ribonucleotide (FGAM) and glutamate. The FGAM synthase complex is composed of three subunits. PurQ produces an ammonia molecule by converting glutamine to glutamate. PurL transfers the ammonia molecule to FGAR to form FGAM in an ATP-dependent manner. PurS interacts with PurQ and PurL and is thought to assist in the transfer of the ammonia molecule from PurQ to PurL. This Exiguobacterium sp. (strain ATCC BAA-1283 / AT1b) protein is Phosphoribosylformylglycinamidine synthase subunit PurQ.